Reading from the N-terminus, the 290-residue chain is 33 kDa chaperonin (290 aa).

2 disulfide bridges follow: Cys235–Cys237 and Cys268–Cys271.

The protein belongs to the HSP33 family. Under oxidizing conditions two disulfide bonds are formed involving the reactive cysteines. Under reducing conditions zinc is bound to the reactive cysteines and the protein is inactive.

It localises to the cytoplasm. Its function is as follows. Redox regulated molecular chaperone. Protects both thermally unfolding and oxidatively damaged proteins from irreversible aggregation. Plays an important role in the bacterial defense system toward oxidative stress. The protein is 33 kDa chaperonin of Streptococcus pyogenes serotype M4 (strain MGAS10750).